The chain runs to 223 residues: Thiamine-phosphate synthase (223 aa).

4-amino-2-methyl-5-(diphosphooxymethyl)pyrimidine-binding positions include 45-49 (QYREK) and Asn-77. Residues Asp-78 and Asp-97 each coordinate Mg(2+). Residue Thr-116 coordinates 4-amino-2-methyl-5-(diphosphooxymethyl)pyrimidine. 142–144 (SYT) is a binding site for 2-[(2R,5Z)-2-carboxy-4-methylthiazol-5(2H)-ylidene]ethyl phosphate. Position 145 (Lys-145) interacts with 4-amino-2-methyl-5-(diphosphooxymethyl)pyrimidine. 2-[(2R,5Z)-2-carboxy-4-methylthiazol-5(2H)-ylidene]ethyl phosphate contacts are provided by residues Gly-173 and 193-194 (VT).

The protein belongs to the thiamine-phosphate synthase family. It depends on Mg(2+) as a cofactor.

The enzyme catalyses 2-[(2R,5Z)-2-carboxy-4-methylthiazol-5(2H)-ylidene]ethyl phosphate + 4-amino-2-methyl-5-(diphosphooxymethyl)pyrimidine + 2 H(+) = thiamine phosphate + CO2 + diphosphate. The catalysed reaction is 2-(2-carboxy-4-methylthiazol-5-yl)ethyl phosphate + 4-amino-2-methyl-5-(diphosphooxymethyl)pyrimidine + 2 H(+) = thiamine phosphate + CO2 + diphosphate. It carries out the reaction 4-methyl-5-(2-phosphooxyethyl)-thiazole + 4-amino-2-methyl-5-(diphosphooxymethyl)pyrimidine + H(+) = thiamine phosphate + diphosphate. It functions in the pathway cofactor biosynthesis; thiamine diphosphate biosynthesis; thiamine phosphate from 4-amino-2-methyl-5-diphosphomethylpyrimidine and 4-methyl-5-(2-phosphoethyl)-thiazole: step 1/1. Condenses 4-methyl-5-(beta-hydroxyethyl)thiazole monophosphate (THZ-P) and 2-methyl-4-amino-5-hydroxymethyl pyrimidine pyrophosphate (HMP-PP) to form thiamine monophosphate (TMP). The sequence is that of Thiamine-phosphate synthase from Dictyoglomus thermophilum (strain ATCC 35947 / DSM 3960 / H-6-12).